The sequence spans 390 residues: Phosphopentomutase (390 aa).

Mn(2+)-binding residues include Asp-9, Asp-283, His-288, Asp-324, His-325, and His-336.

It belongs to the phosphopentomutase family. It depends on Mn(2+) as a cofactor.

The protein resides in the cytoplasm. The catalysed reaction is 2-deoxy-alpha-D-ribose 1-phosphate = 2-deoxy-D-ribose 5-phosphate. The enzyme catalyses alpha-D-ribose 1-phosphate = D-ribose 5-phosphate. It participates in carbohydrate degradation; 2-deoxy-D-ribose 1-phosphate degradation; D-glyceraldehyde 3-phosphate and acetaldehyde from 2-deoxy-alpha-D-ribose 1-phosphate: step 1/2. Functionally, isomerase that catalyzes the conversion of deoxy-ribose 1-phosphate (dRib-1-P) and ribose 1-phosphate (Rib-1-P) to deoxy-ribose 5-phosphate (dRib-5-P) and ribose 5-phosphate (Rib-5-P), respectively. The protein is Phosphopentomutase of Thermotoga maritima (strain ATCC 43589 / DSM 3109 / JCM 10099 / NBRC 100826 / MSB8).